Reading from the N-terminus, the 469-residue chain is Probable Xaa-Pro aminopeptidase PEPP (469 aa).

Mn(2+)-binding residues include aspartate 265, aspartate 276, glutamate 399, and glutamate 439.

Belongs to the peptidase M24B family. Mn(2+) serves as cofactor.

It carries out the reaction Release of any N-terminal amino acid, including proline, that is linked to proline, even from a dipeptide or tripeptide.. Functionally, catalyzes the removal of a penultimate prolyl residue from the N-termini of peptides. The polypeptide is Probable Xaa-Pro aminopeptidase PEPP (PEPP) (Coccidioides posadasii (strain C735) (Valley fever fungus)).